Consider the following 164-residue polypeptide: CDP-archaeol synthase (164 aa).

The next 4 helical transmembrane spans lie at 3–23, 51–71, 77–97, and 122–142; these read LLYF…AVLA, YEGF…PNLL, LLDA…GAFI, and LAVY…AVII.

The protein belongs to the CDP-archaeol synthase family. Mg(2+) is required as a cofactor.

It is found in the cell membrane. It catalyses the reaction 2,3-bis-O-(geranylgeranyl)-sn-glycerol 1-phosphate + CTP + H(+) = CDP-2,3-bis-O-(geranylgeranyl)-sn-glycerol + diphosphate. It functions in the pathway membrane lipid metabolism; glycerophospholipid metabolism. Functionally, catalyzes the formation of CDP-2,3-bis-(O-geranylgeranyl)-sn-glycerol (CDP-archaeol) from 2,3-bis-(O-geranylgeranyl)-sn-glycerol 1-phosphate (DGGGP) and CTP. This reaction is the third ether-bond-formation step in the biosynthesis of archaeal membrane lipids. The protein is CDP-archaeol synthase of Pyrobaculum islandicum (strain DSM 4184 / JCM 9189 / GEO3).